Here is a 248-residue protein sequence, read N- to C-terminus: Putative amino-acid ABC transporter-binding protein PatH (248 aa).

A signal peptide spans 1–21; the sequence is MKNWIKVAVAAIALSAATVQA.

This sequence belongs to the bacterial solute-binding protein 3 family.

The protein localises to the periplasm. Probably part of a binding-protein-dependent transport system for an amino acid. The protein is Putative amino-acid ABC transporter-binding protein PatH (patH) of Vibrio harveyi (Beneckea harveyi).